A 1398-amino-acid polypeptide reads, in one-letter code: Protein timeless (1398 aa).

The tract at residues Val237–Gln268 is necessary for normal circadian rhythm. Disordered regions lie at residues Glu254–Arg300, Ala322–Asn452, Thr478–Lys555, Thr1127–Ser1147, and Asn1220–Thr1239. Residues Ser273–Ser290 show a composition bias toward low complexity. Gly residues predominate over residues Asn291–Arg300. A compositionally biased stretch (polar residues) spans Met338–Ala355. Positions Glu365–His375 are enriched in basic and acidic residues. Positions Gly376–Tyr390 are enriched in acidic residues. Composition is skewed to polar residues over residues Leu400–Pro421, Ala440–Asn452, and Gln504–Ser515. Low complexity predominate over residues Gln522–Pro531. Positions Lys550–Arg560 match the Nuclear localization signal motif.

This sequence belongs to the timeless family. In terms of assembly, forms a heterodimer with period (PER); the complex then translocates into the nucleus. Phosphorylated with a circadian rhythmicity. Expressed in head, photoreceptors, lateral neurons and glial cells in the lamina and medulla of the optic lobes. Expression follows a light-dark cycle, levels show a significant decrease at the end of the night and then remain low throughout the light period (at protein level).

The protein localises to the nucleus. The protein resides in the cytoplasm. It localises to the perinuclear region. Functionally, required for the production of circadian rhythms. The biological cycle depends on the rhythmic formation and nuclear localization of the TIM-PER complex. Light induces the degradation of TIM, which promotes elimination of PER. Nuclear activity of the heterodimer coordinatively regulates PER and TIM transcription through a negative feedback loop. Behaves as a negative element in circadian transcriptional loop. Does not appear to bind DNA, suggesting indirect transcriptional inhibition. The polypeptide is Protein timeless (tim) (Drosophila melanogaster (Fruit fly)).